A 338-amino-acid chain; its full sequence is Glyceraldehyde-3-phosphate dehydrogenase, cytosolic (338 aa).

Residues R14–I15, D36, and R83 contribute to the NAD(+) site. Residues S154–T156, T185, T214–G215, and R237 each bind D-glyceraldehyde 3-phosphate. The active-site Nucleophile is C155. N319 contacts NAD(+).

The protein belongs to the glyceraldehyde-3-phosphate dehydrogenase family. In terms of assembly, homotetramer.

It localises to the cytoplasm. It catalyses the reaction D-glyceraldehyde 3-phosphate + phosphate + NAD(+) = (2R)-3-phospho-glyceroyl phosphate + NADH + H(+). The protein operates within carbohydrate degradation; glycolysis; pyruvate from D-glyceraldehyde 3-phosphate: step 1/5. In terms of biological role, key enzyme in glycolysis that catalyzes the first step of the pathway by converting D-glyceraldehyde 3-phosphate (G3P) into 3-phospho-D-glyceroyl phosphate. Essential for the maintenance of cellular ATP levels and carbohydrate metabolism. The chain is Glyceraldehyde-3-phosphate dehydrogenase, cytosolic (GAPC) from Ranunculus acris (Meadow buttercup).